The following is a 411-amino-acid chain: NAD-dependent dihydropyrimidine dehydrogenase subunit PreA (411 aa).

Substrate-binding positions include asparagine 76 and 134-136 (NFS). Residue cysteine 137 is the Nucleophile of the active site. Substrate is bound at residue 201–202 (NT). 4Fe-4S ferredoxin-type domains lie at 335 to 367 (VYPRINLDKCVGCGRCYISCYDGGHQAMEWSEK) and 369 to 398 (RTPHCNTEKCVGCLLCGHVCPVGCIELGEV). Residues cysteine 344, cysteine 347, cysteine 350, cysteine 354, cysteine 378, cysteine 381, cysteine 384, and cysteine 388 each coordinate [4Fe-4S] cluster.

The protein belongs to the dihydropyrimidine dehydrogenase family. In terms of assembly, heterotetramer of 2 PreA and 2 PreT subunits. The cofactor is [4Fe-4S] cluster.

It carries out the reaction 5,6-dihydrouracil + NAD(+) = uracil + NADH + H(+). It catalyses the reaction 5,6-dihydrothymine + NAD(+) = thymine + NADH + H(+). Functionally, involved in pyrimidine base degradation. Catalyzes physiologically the reduction of uracil to 5,6-dihydrouracil (DHU) by using NADH as a specific cosubstrate. It also catalyzes the reverse reaction and the reduction of thymine to 5,6-dihydrothymine (DHT). This is NAD-dependent dihydropyrimidine dehydrogenase subunit PreA (preA) from Escherichia coli O157:H7.